Reading from the N-terminus, the 556-residue chain is 2-succinyl-5-enolpyruvyl-6-hydroxy-3-cyclohexene-1-carboxylate synthase (556 aa).

The protein belongs to the TPP enzyme family. MenD subfamily. As to quaternary structure, homodimer. It depends on Mg(2+) as a cofactor. Mn(2+) is required as a cofactor. Thiamine diphosphate serves as cofactor.

It carries out the reaction isochorismate + 2-oxoglutarate + H(+) = 5-enolpyruvoyl-6-hydroxy-2-succinyl-cyclohex-3-ene-1-carboxylate + CO2. It functions in the pathway quinol/quinone metabolism; 1,4-dihydroxy-2-naphthoate biosynthesis; 1,4-dihydroxy-2-naphthoate from chorismate: step 2/7. Its pathway is quinol/quinone metabolism; menaquinone biosynthesis. Catalyzes the thiamine diphosphate-dependent decarboxylation of 2-oxoglutarate and the subsequent addition of the resulting succinic semialdehyde-thiamine pyrophosphate anion to isochorismate to yield 2-succinyl-5-enolpyruvyl-6-hydroxy-3-cyclohexene-1-carboxylate (SEPHCHC). This chain is 2-succinyl-5-enolpyruvyl-6-hydroxy-3-cyclohexene-1-carboxylate synthase, found in Salmonella arizonae (strain ATCC BAA-731 / CDC346-86 / RSK2980).